Reading from the N-terminus, the 468-residue chain is Shaggy-related protein kinase theta (468 aa).

2 disordered regions span residues 1–53 (MNVM…DQST) and 91–112 (HANR…CGTE). Residues 134 to 418 (YMAQRVVGTG…ALEACAHPFF (285 aa)) enclose the Protein kinase domain. ATP is bound by residues 140–148 (VGTGSFGVV) and Lys163. Residue Asp259 is the Proton acceptor of the active site. Tyr294 carries the phosphotyrosine modification.

Belongs to the protein kinase superfamily. CMGC Ser/Thr protein kinase family. GSK-3 subfamily. Post-translationally, autophosphorylated mainly on threonine and serine residues. As to expression, in developing pollen.

It carries out the reaction L-seryl-[protein] + ATP = O-phospho-L-seryl-[protein] + ADP + H(+). It catalyses the reaction L-threonyl-[protein] + ATP = O-phospho-L-threonyl-[protein] + ADP + H(+). Functionally, may mediate extracellular signals to regulate transcription in differentiating cells. The protein is Shaggy-related protein kinase theta of Brassica napus (Rape).